The following is a 72-amino-acid chain: Conotoxin TxMMSK-04 (72 aa).

Residues 1–20 (MMSKLGVLLTICLLLFPLTA) form the signal peptide. A propeptide spanning residues 21–51 (VPLDGDQPADRPAERMQDGISSEHHPFFDSV) is cleaved from the precursor. At Gln-55 the chain carries Pyrrolidone carboxylic acid. 3 disulfides stabilise this stretch: Cys-57–Cys-71, Cys-58–Cys-67, and Cys-63–Cys-70. The residue at position 69 (Pro-69) is a 4-hydroxyproline. Residue Cys-71 is modified to Cysteine amide.

This sequence belongs to the conotoxin M superfamily. As to expression, expressed by the venom duct.

Its subcellular location is the secreted. This chain is Conotoxin TxMMSK-04, found in Conus textile (Cloth-of-gold cone).